Reading from the N-terminus, the 105-residue chain is UPF0145 protein AHA_2580 (105 aa).

Belongs to the UPF0145 family.

The protein is UPF0145 protein AHA_2580 of Aeromonas hydrophila subsp. hydrophila (strain ATCC 7966 / DSM 30187 / BCRC 13018 / CCUG 14551 / JCM 1027 / KCTC 2358 / NCIMB 9240 / NCTC 8049).